The chain runs to 335 residues: MAAGWWFWCVSVTVAVALLIVCDVPSVSAQRKKEMVLSEKVCQLMEWTNKRPVIRMNGDKFRRLVKAPPRNYSVIVMFTALQLHRQCVVCKQADEEFQILANSWRYSSAFTNRIFFAMVDFDEGSDVFQMLNMNSAPTFINFPAKGKPKRGDTYELQVRGFSAEQIARWIADRTDVNIRVIRPPNYAGPLMLGLLLAVIGGLVYLRRSNMEFLFNKTGWAFAALCFVLAMTSGQMWNHIRGPPYAHKNPHTGHVNYIHGSSQAQFVAETHIVLLFNGGVTLGMVLLCEAATSDMDIGKRKIMCVAGIGLVVLFFSWMLSIFRSKYHGYPYSFLMS.

Positions 1-29 (MAAGWWFWCVSVTVAVALLIVCDVPSVSA) are cleaved as a signal peptide. Residues 30–184 (QRKKEMVLSE…DVNIRVIRPP (155 aa)) lie on the Extracellular side of the membrane. In terms of domain architecture, Thioredoxin spans 47-175 (WTNKRPVIRM…IARWIADRTD (129 aa)). N-linked (GlcNAc...) asparagine glycosylation is present at Asn-71. A disulfide bond links Cys-87 and Cys-90. The chain crosses the membrane as a helical span at residues 185 to 205 (NYAGPLMLGLLLAVIGGLVYL). The Cytoplasmic portion of the chain corresponds to 206 to 209 (RRSN). Residues 210–230 (MEFLFNKTGWAFAALCFVLAM) traverse the membrane as a helical segment. Topologically, residues 231-270 (TSGQMWNHIRGPPYAHKNPHTGHVNYIHGSSQAQFVAETH) are extracellular. The chain crosses the membrane as a helical span at residues 271 to 291 (IVLLFNGGVTLGMVLLCEAAT). Topologically, residues 292–300 (SDMDIGKRK) are cytoplasmic. A helical membrane pass occupies residues 301 to 321 (IMCVAGIGLVVLFFSWMLSIF). The Extracellular segment spans residues 322–335 (RSKYHGYPYSFLMS).

It belongs to the OST3/OST6 family. Accessory component of the STT3B-containing form of the oligosaccharyltransferase (OST) complex. OST exists in two different complex forms which contain common core subunits RPN1, RPN2, OST48, OST4, DAD1 and TMEM258, either STT3A or STT3B as catalytic subunits, and form-specific accessory subunits. OST can form stable complexes with the Sec61 complex or with both the Sec61 and TRAP complexes. The association of TUSC3 or MAGT1 with the STT3B-containing complex seems to be mutually exclusvice.

The protein localises to the cell membrane. Its subcellular location is the endoplasmic reticulum. It is found in the endoplasmic reticulum membrane. The protein operates within protein modification; protein glycosylation. Its function is as follows. Accessory component of the STT3B-containing form of the N-oligosaccharyl transferase (OST) complex which catalyzes the transfer of a high mannose oligosaccharide from a lipid-linked oligosaccharide donor to an asparagine residue within an Asn-X-Ser/Thr consensus motif in nascent polypeptide chains. Involved in N-glycosylation of STT3B-dependent substrates. Specifically required for the glycosylation of a subset of acceptor sites that are near cysteine residues; in this function seems to act redundantly with TUSC3. In its oxidized form proposed to form transient mixed disulfides with a glycoprotein substrate to facilitate access of STT3B to the unmodified acceptor site. Also has oxidoreductase-independent functions in the STT3B-containing OST complex possibly involving substrate recognition. Could indirectly play a role in Mg(2+) transport in epithelial cells. This is Dolichyl-diphosphooligosaccharide--protein glycosyltransferase subunit MAGT1 from Pongo abelii (Sumatran orangutan).